We begin with the raw amino-acid sequence, 252 residues long: Type I iodothyronine deiodinase (252 aa).

The Extracellular portion of the chain corresponds to 1–17 (MESLLQTIKLMLRYIQK). A helical; Signal-anchor for type III membrane protein transmembrane segment spans residues 18 to 38 (ALILFFLFLYVVVGKVLMFLF). At 39–252 (PQTMASVLKS…EVCSVLEKKK (214 aa)) the chain is on the cytoplasmic side. Sec130 is a catalytic residue. A non-standard amino acid (selenocysteine) is located at residue Sec130.

Belongs to the iodothyronine deiodinase family. Predominantly monomer. Can form homodimers but homodimerization is not essential for enzyme activity.

The protein resides in the cell membrane. It localises to the endoplasmic reticulum membrane. It is found in the basolateral cell membrane. It catalyses the reaction 3,3',5-triiodo-L-thyronine + iodide + A + H(+) = L-thyroxine + AH2. It carries out the reaction 3,3',5'-triiodo-L-thyronine + iodide + A + H(+) = L-thyroxine + AH2. The enzyme catalyses 3,3'-diiodo-L-thyronine + iodide + A + H(+) = 3,3',5'-triiodo-L-thyronine + AH2. The catalysed reaction is 3,3'-diiodo-L-thyronine + iodide + A + H(+) = 3,3',5-triiodo-L-thyronine + AH2. It catalyses the reaction 3'-iodo-L-thyronine + iodide + A + H(+) = 3',5'-diiodo-L-thyronine + AH2. It carries out the reaction 3-iodo-L-thyronine + iodide + A + H(+) = 3,5-diiodo-L-thyronine + AH2. The enzyme catalyses 3-iodo-L-thyronine + iodide + A + H(+) = 3,3'-diiodo-L-thyronine + AH2. The catalysed reaction is 3,3'-diiodothyronamine + iodide + A + H(+) = 3,3',5'-triiodothyronamine + AH2. It catalyses the reaction 3'-iodothyronamine + iodide + A + H(+) = 3',5'-diiodothyronamine + AH2. It carries out the reaction 3-iodothyronamine + iodide + A + H(+) = 3,3'-diiodothyronamine + AH2. The enzyme catalyses 3,3'-diiodothyronamine + iodide + A + H(+) = 3,3',5-triiodothyronamine + AH2. The catalysed reaction is 3-iodothyronamine + iodide + A + H(+) = 3,5-diiodothyronamine + AH2. It catalyses the reaction 3,3'-diiodo-L-thyronine sulfate + iodide + A + H(+) = 3,3',5'-triiodo-L-thyronine sulfate + AH2. It carries out the reaction 3,3',5'-triiodo-L-thyronine sulfate + iodide + A + H(+) = L-thyroxine sulfate + AH2. The enzyme catalyses 3,3'-diiodo-L-thyronine sulfate + iodide + A + H(+) = 3,3',5-triiodo-L-thyronine sulfate + AH2. Its activity is regulated as follows. Lacks sensitivity to 6-n-propylthiouracil. Its function is as follows. Plays a crucial role in the metabolism of thyroid hormones (TH) and has specific roles in TH activation and inactivation by deiodination. Catalyzes the deiodination of L-thyroxine (T4) to 3,5,3'-triiodothyronine (T3) and 3,3',5'-triiodothyronine (rT3) to 3,3'-diiodothyronine (3,3'-T2) via outer-ring deiodination (ORD). Catalyzes the deiodiantion of T4 to rT3 and T3 to 3,3'-T2 via inner-ring deiodination (IRD). Catalyzes the deiodination of 3',5'-diiodothyronine (3',5'-T2) to 3'-monoiodothyronine (3'-T1) via ORD. Catalyzes the deiodination of 3,5-diiodothyronine (3,5-T2) to 3-monoiodothyronine (3-T1) and 3,3'-T2 to 3-T1 via IRD. Catalyzes the phenolic ring deiodinations of 3,3',5'-triiodothyronamine, 3',5'-diiodothyronamine and 3,3'-diiodothyronamine as well as tyrosyl ring deiodinations of 3,5,3'-triiodothyronamine and 3,5-diiodothyronamine. Catalyzes the deiodination of L-thyroxine sulfate and 3,3',5-triiodo-L-thyronine sulfate via IRD and of 3,3',5'-triiodo-L-thyronine sulfate via ORD. The chain is Type I iodothyronine deiodinase (dio1) from Xenopus laevis (African clawed frog).